A 93-amino-acid polypeptide reads, in one-letter code: Large ribosomal subunit protein uL23 (93 aa).

The protein belongs to the universal ribosomal protein uL23 family. As to quaternary structure, part of the 50S ribosomal subunit. Contacts protein L29, and trigger factor when it is bound to the ribosome.

Its function is as follows. One of the early assembly proteins it binds 23S rRNA. One of the proteins that surrounds the polypeptide exit tunnel on the outside of the ribosome. Forms the main docking site for trigger factor binding to the ribosome. This is Large ribosomal subunit protein uL23 from Helicobacter acinonychis (strain Sheeba).